The primary structure comprises 283 residues: UPF0276 protein Nmul_A2550 (283 aa).

This sequence belongs to the UPF0276 family.

The chain is UPF0276 protein Nmul_A2550 from Nitrosospira multiformis (strain ATCC 25196 / NCIMB 11849 / C 71).